The following is a 616-amino-acid chain: FNIP repeat-containing protein DDB_G0290639 (616 aa).

Positions 239-274 (FENNNNNNNNNNNNNNNNNNNNNNNNNNNNNKKTEK) form a coiled coil. Over residues 241–269 (NNNNNNNNNNNNNNNNNNNNNNNNNNNNN) the composition is skewed to low complexity. The disordered stretch occupies residues 241-270 (NNNNNNNNNNNNNNNNNNNNNNNNNNNNNK). FNIP repeat units follow at residues 337-379 (FEES…FNDG), 380-421 (FNQS…KLCN), 423-464 (FSQP…VFYD), 466-508 (FNQL…FSDG), 509-550 (FNQT…LIDS), and 552-593 (FQQP…ILDK).

The sequence is that of FNIP repeat-containing protein DDB_G0290639 from Dictyostelium discoideum (Social amoeba).